We begin with the raw amino-acid sequence, 379 residues long: uncharacterized protein (379 aa).

Disordered stretches follow at residues 1–25 (MASDWRRQSTSRGIPNEGQNDEKGK), 128–158 (QGKTTSATTSNSTIRGKPSFGRENSAKIERT), and 355–379 (TEKTSILSPRRRQKRMRSLSSQGDI). The span at 128–141 (QGKTTSATTSNSTI) shows a compositional bias: polar residues.

This is an uncharacterized protein from Caenorhabditis elegans.